We begin with the raw amino-acid sequence, 314 residues long: Vacuolar membrane protein FOSTERSB_4073 (314 aa).

A disordered region spans residues lysine 32–alanine 60. Residues valine 93–leucine 113 form a helical membrane-spanning segment. 3 positions are modified to phosphoserine: serine 148, serine 254, and serine 274. Positions glutamate 240–asparagine 309 are disordered. The segment covering serine 254 to histidine 269 has biased composition (basic and acidic residues).

This sequence belongs to the PRM5 family.

The protein resides in the vacuole membrane. This Saccharomyces cerevisiae (strain FostersB) (Baker's yeast) protein is Vacuolar membrane protein FOSTERSB_4073.